The following is an 881-amino-acid chain: Glutamate--tRNA ligase (881 aa).

Residues 1 to 480 form a glutamyl-tRNA synthetase region; it reads MSVRVRLAPS…ILRFKKSIGQ (480 aa). A 'HIGH' region motif is present at residues 9-19; that stretch reads PSPTGNLHIGT. Positions 248 to 252 match the 'KMSKS' region motif; the sequence is KLSKR. K251 contacts ATP. The unknown stretch occupies residues 481-881; that stretch reads EIEDTKIEDT…IKREIFGKPS (401 aa). Over residues 488-502 the composition is skewed to basic and acidic residues; sequence EDTKKAETTPHKSKG. A disordered region spans residues 488–747; that stretch reads EDTKKAETTP…PTATDAETRE (260 aa). Positions 522–548 are enriched in low complexity; that stretch reads QTQTTKPPKKGQTATPVATTPTATDVT. Over residues 549 to 562 the composition is skewed to polar residues; that stretch reads ENTSVGTQETQSQI. Residues 563-576 show a composition bias toward low complexity; it reads TTPVATTPTATDVT. Residues 577–590 are compositionally biased toward polar residues; the sequence is ENTSVGTQETQSQI. Residues 591-604 show a composition bias toward low complexity; the sequence is TTPVATTPTATDVT. Polar residues predominate over residues 605–618; the sequence is ENTSVETQETQSQI. Low complexity predominate over residues 619–632; the sequence is TTPVATTPTATDVT. A compositionally biased stretch (polar residues) spans 633–646; sequence ENTSVETQETQSQI. Positions 647-660 are enriched in low complexity; it reads TTPVATTPTATDVT. Polar residues predominate over residues 661–674; the sequence is ENTSVGTQETQSQI. Residues 675-688 show a composition bias toward low complexity; the sequence is TTPVATTPTATDVT. Over residues 689-702 the composition is skewed to polar residues; the sequence is ENTSVETQETQSQI. Positions 703–720 are enriched in low complexity; sequence TTPVATTSTATDVTENTS. Positions 721–730 are enriched in polar residues; the sequence is VETQETQSQI. Over residues 731-742 the composition is skewed to low complexity; that stretch reads TTPVATTPTATD. The next 2 helical transmembrane spans lie at 809–829 and 832–852; these read LFGW…VIEA and GIPI…VWFV.

Belongs to the class-I aminoacyl-tRNA synthetase family. Glutamate--tRNA ligase type 1 subfamily. In terms of assembly, monomer.

The protein resides in the cytoplasm. It is found in the cell membrane. It catalyses the reaction tRNA(Glu) + L-glutamate + ATP = L-glutamyl-tRNA(Glu) + AMP + diphosphate. Functionally, catalyzes the attachment of glutamate to tRNA(Glu) in a two-step reaction: glutamate is first activated by ATP to form Glu-AMP and then transferred to the acceptor end of tRNA(Glu). The sequence is that of Glutamate--tRNA ligase (gltX) from Trichodesmium erythraeum (strain IMS101).